The chain runs to 463 residues: MLTKEYRGVASINGPLVVVDGVTDVGFDEMVEVITPDKHKRRGRVLQVSKNRAVIQVFEGTSGLATETTRVKFLRHPMEIALSRDILGRVFNGVGEPIDGGGEVYSNKKYNINGNAINPYSRQYPRNYIQTGVSAIDGLITLIRGQKLPIFSGNGLPHNQLAAQIARQARLGDDNEDFAVVFVAMGIKHDDANFFINSFEKSGVLQNVVVFLNLADDPAVERIIAPRIGLTAAEYLAFEEGMHILVIMTDMTNYCEALRELSSRREEVPSRKGYPGYLYSDLASLYERAGMIKGERGSITQLPILTMPNDDITHPVPDLTGYITEGQIVLKRDLYQRGVYPPINILPSLSRLMKDGIGEGFTREDHPNVSSQLYAAYSRVQEVKSLASVIGEDELSSLDQTYLKFGRVFEKRFLSQGREENRTIEQTLDLAWEVLSELPPTELDRISGEELEKYYRGSVNDNG.

It belongs to the ATPase alpha/beta chains family.

Its function is as follows. Produces ATP from ADP in the presence of a proton gradient across the membrane. The V-type beta chain is a regulatory subunit. This is V-type ATP synthase beta chain from Halothermothrix orenii (strain H 168 / OCM 544 / DSM 9562).